We begin with the raw amino-acid sequence, 433 residues long: uncharacterized protein (433 aa).

The interval 1–126 (MAAHIALIAH…VIKLLGKTKT (126 aa)) is methylglyoxal synthase. One can recognise an MGS-like domain in the interval 1-145 (MAAHIALIAH…GQGNVERELD (145 aa)). Aspartate 62 is an active-site residue. A DAGKc domain is found at 127–262 (GHLIFNPVAG…VDTALCNDIP (136 aa)).

In the N-terminal section; belongs to the methylglyoxal synthase family.

This is an uncharacterized protein from Synechocystis sp. (strain ATCC 27184 / PCC 6803 / Kazusa).